Here is a 341-residue protein sequence, read N- to C-terminus: Ribulose-5-phosphate reductase (341 aa).

Zn(2+) is bound by residues C38, H64, E65, and E144.

It belongs to the zinc-containing alcohol dehydrogenase family. Zn(2+) is required as a cofactor.

It carries out the reaction D-ribitol 5-phosphate + NADP(+) = D-ribulose 5-phosphate + NADPH + H(+). Its pathway is cell wall biogenesis; poly(ribitol phosphate) teichoic acid biosynthesis. Its function is as follows. Catalyzes the NADPH dependent reduction of D-ribulose 5-phosphate to D-ribitol 5-phosphate. The sequence is that of Ribulose-5-phosphate reductase from Bacillus spizizenii (strain ATCC 23059 / NRRL B-14472 / W23) (Bacillus subtilis subsp. spizizenii).